The chain runs to 452 residues: Protein mab-21-like 4 (452 aa).

The protein is Protein mab-21-like 4 (Mab21l4) of Mus musculus (Mouse).